We begin with the raw amino-acid sequence, 556 residues long: CBS domain-containing protein CBSCBSPB3 (556 aa).

Composition is skewed to polar residues over residues 1–20 (MSTQ…NSTV) and 30–44 (PVQS…NTSK). Residues 1 to 63 (MSTQATGPSS…SQAPSNGERT (63 aa)) form a disordered region. Ser-2 is modified (N-acetylserine). 4 CBS domains span residues 68 to 127 (RLSK…RPDQ), 134 to 189 (MTRN…RMEK), 235 to 294 (ITDN…LSPE), and 302 to 360 (MTPN…ENSS). Residues 414-502 (GNSFSFKFED…KVLRLHLDFT (89 aa)) enclose the PB1 domain. Residues 527 to 549 (WVSWRGGVVVTGAVVLTSIAIVV) traverse the membrane as a helical segment.

It localises to the membrane. This chain is CBS domain-containing protein CBSCBSPB3 (CBSCBSPB3), found in Arabidopsis thaliana (Mouse-ear cress).